Reading from the N-terminus, the 308-residue chain is Putative glutamine amidotransferase Rv2859c (308 aa).

A disordered region spans residues 1-62 (MDLSASRSDG…ASPRLRSPLG (62 aa)). 3 stretches are compositionally biased toward low complexity: residues 13–24 (PLRPASPRLRSP), 31–42 (PLRPASPRLRSP), and 49–61 (PLRPASPRLRSPL). The region spanning 78–301 (RTGVWDIPAG…VDAASGYAGR (224 aa)) is the Glutamine amidotransferase type-1 domain. Catalysis depends on Cys177, which acts as the Nucleophile. Active-site residues include His277 and Glu279. Lys289 is covalently cross-linked (Isoglutamyl lysine isopeptide (Lys-Gln) (interchain with Q-Cter in protein Pup)).

This is Putative glutamine amidotransferase Rv2859c from Mycobacterium tuberculosis (strain ATCC 25618 / H37Rv).